The following is a 227-amino-acid chain: Ion-translocating oxidoreductase complex subunit E (227 aa).

The next 6 membrane-spanning stretches (helical) occupy residues 18 to 38 (ALVQLLGLCPLLAVSATVTNA), 39 to 59 (LGLGIATILVLVGSNLIVSLV), 69 to 89 (IPVFVMIIASLVTCVQLLMNA), 93 to 113 (GLYLSLGIFIPLIVTNCIIIG), 125 to 145 (LPAVLDGLWMGMGMTAVLVLL), and 182 to 202 (HFLLAMLPPGAFLGVGFLIAL).

Belongs to the NqrDE/RnfAE family. As to quaternary structure, the complex is composed of six subunits: RnfA, RnfB, RnfC, RnfD, RnfE and RnfG.

The protein localises to the cell inner membrane. Its function is as follows. Part of a membrane-bound complex that couples electron transfer with translocation of ions across the membrane. The sequence is that of Ion-translocating oxidoreductase complex subunit E from Aliivibrio fischeri (strain MJ11) (Vibrio fischeri).